Reading from the N-terminus, the 650-residue chain is MATARLGVMRPPRSCALIFLCAFSMATAPTNATAHRRAGTVKSTPPPEDKGNYTAKYYDKNIYFNIYEGRNSTPRRRTLWEIISKFSTSEMLSLKRVKAFVPVDDNPTTTLEDIADILNYAVCDDNSCGCTIETQARIMFGDIIICVPLSADNKGVRNFKDRIMPKGLSQILSSSLGLHLSLLYGAFGSNYNSLAYMRRLKPLTAMTAIAFCPMTTKLELRQNYKVKETLCELIVSIEILKIRNNGGQTMKTLTSFAIVRKDNDGQDWETCTRFAPVNIEDILRYKRAANDTCCRHRDVQHGRRTLESSNSWTQTQYFEPWQDIVDVYVPINDTHCPNDSYVVFETLQGFEWCSRLNKNETKNYLSSVLGFRNALFETEELMETIAMRLASQILSMVGQQGTTIRDIDPAIVSALWHSLPENLTTTNIKYDIASPTHMAPALCTIFVQTGTSKERFRNAGLLMVNNIFTVQGRYTTQNMFERKEYVYKHLGQALCQDGEILFQNEGQKFCRPLTDNRTIVYTMQDQVQKPLSVTWMDFNLVISDYGRDVINNLTKSAMLARKNGPRYLQMENGPRYLQMETFISDLFRHECYQDNYYVLDKKLQMFYPTTHSNELLFIPRKLRCPHLGRNLRFPHLGRNLRFPHVGIGSY.

Residues 1–32 (MATARLGVMRPPRSCALIFLCAFSMATAPTNA) traverse the membrane as a helical; Signal-anchor for type II membrane protein segment. The Virion surface portion of the chain corresponds to 33–650 (TAHRRAGTVK…RFPHVGIGSY (618 aa)). Asparagine 52, asparagine 290, asparagine 332, asparagine 338, asparagine 359, asparagine 422, asparagine 516, and asparagine 552 each carry an N-linked (GlcNAc...) asparagine; by host glycan.

Associates with the gp82-gp105 complex. Post-translationally, N-Glycosylated.

It is found in the virion membrane. The chain is Glycoprotein 105 (U96/U97/U98/U99/U100) from Homo sapiens (Human).